The chain runs to 408 residues: Diguanylate cyclase DgcN (408 aa).

Residues Met-1–Thr-24 are Cytoplasmic-facing. Residues Ser-25–Leu-45 traverse the membrane as a helical segment. At Lys-46–Asn-52 the chain is on the periplasmic side. A helical membrane pass occupies residues Leu-53–Gly-73. The Cytoplasmic portion of the chain corresponds to Pro-74–Pro-112. Residues Gly-113–Ile-133 traverse the membrane as a helical segment. Residues Arg-134 to His-154 are Periplasmic-facing. A helical transmembrane segment spans residues Phe-155 to Ile-175. Over Thr-176–Arg-408 the chain is Cytoplasmic. The HAMP domain maps to Asn-183–Leu-236. One can recognise a GGDEF domain in the interval Lys-278–Arg-408. Asp-286 serves as a coordination point for Mg(2+). The substrate site is built by Asn-294, His-299, and Asp-303. Mg(2+) is bound at residue Asp-329. Catalysis depends on Asp-329, which acts as the Proton acceptor.

In terms of assembly, homodimer. Interacts with the cell division proteins FtsZ and ZipA. Requires Mg(2+) as cofactor.

The protein localises to the cell inner membrane. It carries out the reaction 2 GTP = 3',3'-c-di-GMP + 2 diphosphate. The protein operates within purine metabolism; 3',5'-cyclic di-GMP biosynthesis. With respect to regulation, inhibited by YfiR, which prevents relocation to the midcell. A reductive stress signal is required to inactivate YfiR and turn on the DGC activity of DgcN. In terms of biological role, bifunctional protein that catalyzes the synthesis of cyclic-di-GMP (c-di-GMP) in response to reductive stress and then dynamically relocates to the division site to arrest cell division in response to envelope stress. In the presence of high intracellular c-di-GMP levels, and in response to envelope stress, interacts with cell division proteins and halts cell division, without disassembling the Z ring, but by blocking its further progress toward cytokinesis. Part of a network that regulates cell motility by altering levels of c-di-GMP. The chain is Diguanylate cyclase DgcN from Escherichia coli (strain K12).